A 156-amino-acid chain; its full sequence is Persephin (156 aa).

The N-terminal stretch at 1–21 (MAAGRLRILCLLLLSLHPSLG) is a signal peptide. Cystine bridges form between C66/C124, C93/C152, and C97/C154.

The protein belongs to the TGF-beta family. GDNF subfamily. In terms of assembly, homodimer; disulfide-linked. Interacts with GFRA4 coreceptor and RET: forms a 2:2:2 ternary complex composed of PSPN ligand, GFRA4 and RET receptor.

It localises to the secreted. Growth factor that exhibits neurotrophic activity on mesencephalic dopaminergic and motor neurons. Acts by binding to its coreceptor, GFRA4, leading to autophosphorylation and activation of the RET receptor. This chain is Persephin, found in Mus musculus (Mouse).